Here is a 186-residue protein sequence, read N- to C-terminus: Ribosome-recycling factor (186 aa).

Belongs to the RRF family.

It is found in the cytoplasm. Functionally, responsible for the release of ribosomes from messenger RNA at the termination of protein biosynthesis. May increase the efficiency of translation by recycling ribosomes from one round of translation to another. The polypeptide is Ribosome-recycling factor (Rickettsia rickettsii (strain Iowa)).